Consider the following 581-residue polypeptide: Protein SPT2 homolog (581 aa).

Low complexity predominate over residues 26 to 35; that stretch reads YYSTKYSPPK. 2 disordered regions span residues 26–50 and 145–495; these read YYST…NIQK and QEDK…EYDS. Positions 36-76 form a coiled coil; that stretch reads KQSKESKQLSSNIQKFLQKKEAEEAEKKRLERQKLNDLLAK. Residues 162-181 show a composition bias toward basic and acidic residues; it reads SGTKERVKAAITREREEAKG. Composition is skewed to polar residues over residues 182-197 and 204-213; these read NTRQ…SSAT and VARSYSTSKT. Basic and acidic residues-rich tracts occupy residues 218 to 236 and 256 to 312; these read NAEK…EQRR and LAEK…KETP. Positions 276–307 form a coiled coil; it reads ERLLSAREKRELEERQRQQEQRAQRLKMRESE. Low complexity predominate over residues 352 to 376; it reads SSASSTSLSSSNSHSSASRSSVSSS. The segment covering 447-461 has biased composition (polar residues); it reads TRQTPSSDVQRSQGG. A compositionally biased stretch (acidic residues) spans 486–495; that stretch reads DDDDEDEYDS.

It belongs to the SPT2 family.

This chain is Protein SPT2 homolog, found in Drosophila melanogaster (Fruit fly).